A 291-amino-acid polypeptide reads, in one-letter code: 2-C-methyl-D-erythritol 4-phosphate cytidylyltransferase (291 aa).

The segment at 1–23 (MTERDFDTPVETPTVQPAPAQGA) is disordered.

It belongs to the IspD/TarI cytidylyltransferase family. IspD subfamily.

The enzyme catalyses 2-C-methyl-D-erythritol 4-phosphate + CTP + H(+) = 4-CDP-2-C-methyl-D-erythritol + diphosphate. It functions in the pathway isoprenoid biosynthesis; isopentenyl diphosphate biosynthesis via DXP pathway; isopentenyl diphosphate from 1-deoxy-D-xylulose 5-phosphate: step 2/6. In terms of biological role, catalyzes the formation of 4-diphosphocytidyl-2-C-methyl-D-erythritol from CTP and 2-C-methyl-D-erythritol 4-phosphate (MEP). The polypeptide is 2-C-methyl-D-erythritol 4-phosphate cytidylyltransferase (Bifidobacterium longum (strain NCC 2705)).